A 234-amino-acid polypeptide reads, in one-letter code: (5-formylfuran-3-yl)methyl phosphate synthase (234 aa).

The Schiff-base intermediate with substrate role is filled by K27. Residue K85 is the Proton acceptor of the active site.

Belongs to the MfnB family.

It catalyses the reaction 2 D-glyceraldehyde 3-phosphate = 4-(hydroxymethyl)-2-furancarboxaldehyde phosphate + phosphate + 2 H2O. Its pathway is cofactor biosynthesis; methanofuran biosynthesis. Its function is as follows. Catalyzes the formation of 4-(hydroxymethyl)-2-furancarboxaldehyde phosphate (4-HFC-P) from two molecules of glyceraldehyde-3-P (GA-3-P). The protein is (5-formylfuran-3-yl)methyl phosphate synthase of Methanosarcina acetivorans (strain ATCC 35395 / DSM 2834 / JCM 12185 / C2A).